The chain runs to 161 residues: DNA endonuclease I-CvuI (161 aa).

The protein belongs to the LAGLIDADG endonuclease family.

It is found in the plastid. The protein localises to the chloroplast. Probable endonuclease involved in intron homing. The sequence is that of DNA endonuclease I-CvuI from Chlorella vulgaris (Green alga).